A 399-amino-acid polypeptide reads, in one-letter code: uncharacterized protein (399 aa).

The span at 197–206 shows a compositional bias: polar residues; that stretch reads ENSSASSVTS. Positions 197 to 224 are disordered; sequence ENSSASSVTSEECEQDVMDEQSAEDNEE. The segment covering 207–224 has biased composition (acidic residues); it reads EECEQDVMDEQSAEDNEE.

This is an uncharacterized protein from Diadromus pulchellus (Parasitic wasp).